A 307-amino-acid polypeptide reads, in one-letter code: Inner spore coat protein H-like protein (307 aa).

Belongs to the CotH family.

The protein localises to the spore coat. Its function is as follows. Involved in the assembly of several proteins in the inner and outer layer of the spore coat. The polypeptide is Inner spore coat protein H-like protein (yisJ) (Bacillus subtilis (strain 168)).